Reading from the N-terminus, the 366-residue chain is Agamous-like MADS-box protein AGL36 (366 aa).

One can recognise an MADS-box domain in the interval 1–59 (MKKVKLSLIANERSRKTSFIKRKDGIFKKLHELSTLCGVQACALIYSPFIPVPESWPSR). A coiled-coil region spans residues 86-115 (TYLMERITKAKEQLKNLAAENRELQVRRFM).

In terms of assembly, interacts with AGL62.

The protein localises to the nucleus. Functionally, probable transcription factor. The sequence is that of Agamous-like MADS-box protein AGL36 (AGL36) from Arabidopsis thaliana (Mouse-ear cress).